The primary structure comprises 433 residues: MSAAARTFISIHIGVCFDEMDSPGSSAPSPPDLTIIPKISSKKCQICENPAHGKHFGAVTCRACAAFFRRFGISNNFKPCKTENKCSFRKNGYFSCKKCRMQRCLQFGMTIDNFQFDREPFNPLKMNVGIPQTVDTFSGRPSLILFSAPSGSSGPKRYIDVQFLVDRAVEVLLNGSETPYQVSNVLQKLAIGLQNIRGPQQKVSQIVTKIGKEGIFKLWEEEMLRMAKWLTYFDDFQRLPHSVQIEILNGVWFLFGRLENIASTALARKRKLCKDDMVMTCVNKNVLICDLRTLEIDLSWCSKYTFQQLKFFDQYDDLRQLDILINAMLDLEPTHEELSYMICQLCFHQVGKKLQGNILKTVEKLQEVLSNNLHDYYVNQMNQPKYSKRIARMMKINNTVEQCLYRDRVKADLMKVFEVFHVECSHPGIFLNA.

Positions 41 to 116 (SKKCQICENP…FGMTIDNFQF (76 aa)) form a DNA-binding region, nuclear receptor. 2 NR C4-type zinc fingers span residues 44–64 (CQIC…CRAC) and 80–104 (CKTE…MQRC). The 257-residue stretch at 177–433 (ETPYQVSNVL…CSHPGIFLNA (257 aa)) folds into the NR LBD domain.

It belongs to the nuclear hormone receptor family.

The protein resides in the nucleus. Orphan nuclear receptor. The sequence is that of Nuclear hormone receptor family member nhr-98 (nhr-98) from Caenorhabditis elegans.